The following is a 1097-amino-acid chain: uncharacterized protein (1097 aa).

The stretch at Leu-31–His-1087 forms a coiled coil.

This sequence belongs to the TRAFAC class myosin-kinesin ATPase superfamily. Myosin family. In terms of tissue distribution, specifically expressed in muscles of the head including temporalis and tensor veli palatini.

Has most probably lost the function in masticatory muscles contraction suspected for its homologs in dog (AC F1PT61) and apes. This is an uncharacterized protein from Homo sapiens (Human).